A 321-amino-acid polypeptide reads, in one-letter code: Coiled-coil domain-containing protein 42-like 1 (321 aa).

Coiled-coil stretches lie at residues 36 to 144 (IRRL…EKCH) and 202 to 229 (IVQF…WELR).

Belongs to the CFAP73 family.

The polypeptide is Coiled-coil domain-containing protein 42-like 1 (Xenopus laevis (African clawed frog)).